The following is a 120-amino-acid chain: NAD(P)H-quinone oxidoreductase subunit 3, chloroplastic (120 aa).

The next 3 helical transmembrane spans lie at 9–29, 64–84, and 88–108; these read IFWAFLIISSLIPILAFFISG, MFALVFVVFDVETVFLYPWAM, and VLGVSVFIEALIFVLILIVGL.

Belongs to the complex I subunit 3 family. NDH is composed of at least 16 different subunits, 5 of which are encoded in the nucleus.

It is found in the plastid. The protein resides in the chloroplast thylakoid membrane. It catalyses the reaction a plastoquinone + NADH + (n+1) H(+)(in) = a plastoquinol + NAD(+) + n H(+)(out). It carries out the reaction a plastoquinone + NADPH + (n+1) H(+)(in) = a plastoquinol + NADP(+) + n H(+)(out). Functionally, NDH shuttles electrons from NAD(P)H:plastoquinone, via FMN and iron-sulfur (Fe-S) centers, to quinones in the photosynthetic chain and possibly in a chloroplast respiratory chain. The immediate electron acceptor for the enzyme in this species is believed to be plastoquinone. Couples the redox reaction to proton translocation, and thus conserves the redox energy in a proton gradient. The polypeptide is NAD(P)H-quinone oxidoreductase subunit 3, chloroplastic (Panax ginseng (Korean ginseng)).